We begin with the raw amino-acid sequence, 146 residues long: uncharacterized protein (146 aa).

The disordered stretch occupies residues 87–121; the sequence is SRSHHSTAKSAKSALSSDSGDGSDPDPEPETFPSA. Residues 94 to 106 show a composition bias toward low complexity; that stretch reads AKSAKSALSSDSG.

This is an uncharacterized protein from Escherichia coli (strain K12).